The sequence spans 212 residues: Soluble inorganic pyrophosphatase 1 (212 aa).

Substrate-binding residues include Lys62 and Arg76. Catalysis depends on Tyr84, which acts as the Proton donor. Tyr88 is a binding site for substrate. Mg(2+) contacts are provided by Asp98, Asp103, and Asp135. Tyr172 contacts substrate.

The protein belongs to the PPase family. In terms of assembly, monomer. Requires Mg(2+) as cofactor. Ubiquitous. Lower level of expression in ovary, stigma and pollen.

It localises to the cytoplasm. It catalyses the reaction diphosphate + H2O = 2 phosphate + H(+). Its activity is regulated as follows. Inhibited by Zn(2+), Ca(2+), Ba(2+), Fe(2+), Co(2+), Cu(2+), Eu(2+), Eu(3+) and Mn(2+). Its function is as follows. Catalyzes the irreversible hydrolysis of pyrophosphate (PPi) to phosphate. The MgPPi(2-) complex binds to the enzyme only after a free Mg(2+) ion has bound. No activity with glycerol-3-phosphate, glucose-6-phosphate, p-nitrophenylphosphate, ADP, NADP(+), NAD(+),NADH, NADPH or phosphoribosyl pyrophosphate as substrates. Controls the equilibrium of gluconeogenic reactions in the heterotrophic growth phase of early seedling establishment. Determinates the rate of cytosolic glycolysis, providing carbon for seed storage lipid accumulation. The sequence is that of Soluble inorganic pyrophosphatase 1 from Arabidopsis thaliana (Mouse-ear cress).